The following is a 565-amino-acid chain: DNA repair protein RAD7 (565 aa).

Disordered regions lie at residues Met-1–Ala-22 and Trp-41–Glu-68. Residues Met-1–Asp-200 are hydrophilic. Residues Lys-47–Asp-62 show a composition bias toward basic and acidic residues. Residues Ser-64 and Ser-85 each carry the phosphoserine modification. A disordered region spans residues Ala-105–Arg-137. Residues Ser-115–Ala-127 are compositionally biased toward polar residues.

This sequence to S.pombe SpCC613.14. Component of the global genome repair (GGR) complex composed of at least ABF1, RAD7 and RAD16. Interacts with ELC1.

Functionally, component of the global genome repair (GGR) complex which promotes global genome nucleotide excision repair (GG-NER) which removes DNA damage from nontranscribing DNA. This protein is one of 10 proteins (RAD1, 2,3,4,7,10,14, 16,23 and MMS19) involved in excision repair of DNA damaged with UV light, bulky adducts, or cross-linking agents. In Saccharomyces cerevisiae (strain ATCC 204508 / S288c) (Baker's yeast), this protein is DNA repair protein RAD7 (RAD7).